A 468-amino-acid polypeptide reads, in one-letter code: PE family protein PE3 (468 aa).

Positions 1–92 (MSYVIAAPEM…AGAAYAQAEA (92 aa)) constitute a PE domain. Residues 154-375 (PVAQYTPEQW…DLRVLVDLGY (222 aa)) form the PE-PPE domain.

It belongs to the mycobacterial PE family.

The protein localises to the secreted. It localises to the cell wall. Plays significant roles in mycobacterial persistence during infection and modulates host immune response. This Mycobacterium tuberculosis (strain ATCC 25618 / H37Rv) protein is PE family protein PE3.